We begin with the raw amino-acid sequence, 314 residues long: tRNA-cytidine(32) 2-sulfurtransferase (314 aa).

The short motif at serine 39–serine 44 is the PP-loop motif element. Residues cysteine 114, cysteine 117, and cysteine 205 each coordinate [4Fe-4S] cluster.

The protein belongs to the TtcA family. As to quaternary structure, homodimer. Mg(2+) serves as cofactor. The cofactor is [4Fe-4S] cluster.

It is found in the cytoplasm. The enzyme catalyses cytidine(32) in tRNA + S-sulfanyl-L-cysteinyl-[cysteine desulfurase] + AH2 + ATP = 2-thiocytidine(32) in tRNA + L-cysteinyl-[cysteine desulfurase] + A + AMP + diphosphate + H(+). The protein operates within tRNA modification. In terms of biological role, catalyzes the ATP-dependent 2-thiolation of cytidine in position 32 of tRNA, to form 2-thiocytidine (s(2)C32). The sulfur atoms are provided by the cysteine/cysteine desulfurase (IscS) system. The polypeptide is tRNA-cytidine(32) 2-sulfurtransferase (Cupriavidus necator (strain ATCC 17699 / DSM 428 / KCTC 22496 / NCIMB 10442 / H16 / Stanier 337) (Ralstonia eutropha)).